The following is a 394-amino-acid chain: NAD(P)H-quinone oxidoreductase subunit H (394 aa).

The protein belongs to the complex I 49 kDa subunit family. As to quaternary structure, NDH-1 can be composed of about 15 different subunits; different subcomplexes with different compositions have been identified which probably have different functions. Post-translationally, the initiator methionine has been seen to be kept and removed.

The protein localises to the cellular thylakoid membrane. It carries out the reaction a plastoquinone + NADH + (n+1) H(+)(in) = a plastoquinol + NAD(+) + n H(+)(out). It catalyses the reaction a plastoquinone + NADPH + (n+1) H(+)(in) = a plastoquinol + NADP(+) + n H(+)(out). Functionally, NDH-1 shuttles electrons from an unknown electron donor, via FMN and iron-sulfur (Fe-S) centers, to quinones in the respiratory and/or the photosynthetic chain. The immediate electron acceptor for the enzyme in this species is believed to be plastoquinone. Couples the redox reaction to proton translocation, and thus conserves the redox energy in a proton gradient. Cyanobacterial NDH-1 also plays a role in inorganic carbon-concentration. The chain is NAD(P)H-quinone oxidoreductase subunit H (ndhH) from Synechocystis sp. (strain ATCC 27184 / PCC 6803 / Kazusa).